The chain runs to 80 residues: ATP synthase subunit c (80 aa).

Transmembrane regions (helical) follow at residues 11–31 and 53–73; these read MAAA…IGIL and FFVV…LGLY.

This sequence belongs to the ATPase C chain family. F-type ATPases have 2 components, F(1) - the catalytic core - and F(0) - the membrane proton channel. F(1) has five subunits: alpha(3), beta(3), gamma(1), delta(1), epsilon(1). F(0) has three main subunits: a(1), b(2) and c(10-14). The alpha and beta chains form an alternating ring which encloses part of the gamma chain. F(1) is attached to F(0) by a central stalk formed by the gamma and epsilon chains, while a peripheral stalk is formed by the delta and b chains.

It is found in the cell inner membrane. In terms of biological role, f(1)F(0) ATP synthase produces ATP from ADP in the presence of a proton or sodium gradient. F-type ATPases consist of two structural domains, F(1) containing the extramembraneous catalytic core and F(0) containing the membrane proton channel, linked together by a central stalk and a peripheral stalk. During catalysis, ATP synthesis in the catalytic domain of F(1) is coupled via a rotary mechanism of the central stalk subunits to proton translocation. Key component of the F(0) channel; it plays a direct role in translocation across the membrane. A homomeric c-ring of between 10-14 subunits forms the central stalk rotor element with the F(1) delta and epsilon subunits. The polypeptide is ATP synthase subunit c (Erwinia tasmaniensis (strain DSM 17950 / CFBP 7177 / CIP 109463 / NCPPB 4357 / Et1/99)).